A 338-amino-acid polypeptide reads, in one-letter code: 1-aminocyclopropane-1-carboxylate deaminase (338 aa).

Lysine 51 bears the N6-(pyridoxal phosphate)lysine mark. The Nucleophile role is filled by serine 78.

The protein belongs to the ACC deaminase/D-cysteine desulfhydrase family. Homotrimer. It depends on pyridoxal 5'-phosphate as a cofactor.

It carries out the reaction 1-aminocyclopropane-1-carboxylate + H2O = 2-oxobutanoate + NH4(+). Functionally, catalyzes a cyclopropane ring-opening reaction, the irreversible conversion of 1-aminocyclopropane-1-carboxylate (ACC) to ammonia and alpha-ketobutyrate. Allows growth on ACC as a nitrogen source. This is 1-aminocyclopropane-1-carboxylate deaminase from Burkholderia vietnamiensis (strain G4 / LMG 22486) (Burkholderia cepacia (strain R1808)).